The following is an 86-amino-acid chain: Large ribosomal subunit protein bL31B (86 aa).

It belongs to the bacterial ribosomal protein bL31 family. Type B subfamily. As to quaternary structure, part of the 50S ribosomal subunit.

The sequence is that of Large ribosomal subunit protein bL31B from Salmonella arizonae (strain ATCC BAA-731 / CDC346-86 / RSK2980).